The sequence spans 335 residues: Holliday junction branch migration complex subunit RuvB (335 aa).

The segment at Met1–Tyr181 is large ATPase domain (RuvB-L). ATP contacts are provided by residues Leu20, Arg21, Gly62, Lys65, Thr66, Thr67, Glu128–Phe130, Arg171, Tyr181, and Arg218. Thr66 is a binding site for Mg(2+). Positions Ser182–Gln252 are small ATPAse domain (RuvB-S). The tract at residues Glu255–Phe335 is head domain (RuvB-H). DNA contacts are provided by Arg310 and Arg315.

The protein belongs to the RuvB family. As to quaternary structure, homohexamer. Forms an RuvA(8)-RuvB(12)-Holliday junction (HJ) complex. HJ DNA is sandwiched between 2 RuvA tetramers; dsDNA enters through RuvA and exits via RuvB. An RuvB hexamer assembles on each DNA strand where it exits the tetramer. Each RuvB hexamer is contacted by two RuvA subunits (via domain III) on 2 adjacent RuvB subunits; this complex drives branch migration. In the full resolvosome a probable DNA-RuvA(4)-RuvB(12)-RuvC(2) complex forms which resolves the HJ.

Its subcellular location is the cytoplasm. It carries out the reaction ATP + H2O = ADP + phosphate + H(+). Functionally, the RuvA-RuvB-RuvC complex processes Holliday junction (HJ) DNA during genetic recombination and DNA repair, while the RuvA-RuvB complex plays an important role in the rescue of blocked DNA replication forks via replication fork reversal (RFR). RuvA specifically binds to HJ cruciform DNA, conferring on it an open structure. The RuvB hexamer acts as an ATP-dependent pump, pulling dsDNA into and through the RuvAB complex. RuvB forms 2 homohexamers on either side of HJ DNA bound by 1 or 2 RuvA tetramers; 4 subunits per hexamer contact DNA at a time. Coordinated motions by a converter formed by DNA-disengaged RuvB subunits stimulates ATP hydrolysis and nucleotide exchange. Immobilization of the converter enables RuvB to convert the ATP-contained energy into a lever motion, pulling 2 nucleotides of DNA out of the RuvA tetramer per ATP hydrolyzed, thus driving DNA branch migration. The RuvB motors rotate together with the DNA substrate, which together with the progressing nucleotide cycle form the mechanistic basis for DNA recombination by continuous HJ branch migration. Branch migration allows RuvC to scan DNA until it finds its consensus sequence, where it cleaves and resolves cruciform DNA. In Methanoregula boonei (strain DSM 21154 / JCM 14090 / 6A8), this protein is Holliday junction branch migration complex subunit RuvB.